Consider the following 340-residue polypeptide: Uroporphyrinogen decarboxylase (340 aa).

Substrate contacts are provided by residues 21-25 (RQAGR), D71, Y148, S203, and H316.

It belongs to the uroporphyrinogen decarboxylase family. Homodimer.

The protein localises to the cytoplasm. It carries out the reaction uroporphyrinogen III + 4 H(+) = coproporphyrinogen III + 4 CO2. The protein operates within porphyrin-containing compound metabolism; protoporphyrin-IX biosynthesis; coproporphyrinogen-III from 5-aminolevulinate: step 4/4. Catalyzes the decarboxylation of four acetate groups of uroporphyrinogen-III to yield coproporphyrinogen-III. This is Uroporphyrinogen decarboxylase from Campylobacter hominis (strain ATCC BAA-381 / DSM 21671 / CCUG 45161 / LMG 19568 / NCTC 13146 / CH001A).